A 758-amino-acid chain; its full sequence is 5-methyltetrahydropteroyltriglutamate--homocysteine methyltransferase (758 aa).

Residues 16–19 (RELK) and Lys116 contribute to the 5-methyltetrahydropteroyltri-L-glutamate site. L-homocysteine is bound by residues 436-438 (IGS) and Glu489. L-methionine is bound by residues 436–438 (IGS) and Glu489. Residues 520-521 (RC) and Trp566 each bind 5-methyltetrahydropteroyltri-L-glutamate. Asp604 contacts L-homocysteine. Position 604 (Asp604) interacts with L-methionine. Glu610 serves as a coordination point for 5-methyltetrahydropteroyltri-L-glutamate. Positions 646, 648, and 670 each coordinate Zn(2+). His699 (proton donor) is an active-site residue. A Zn(2+)-binding site is contributed by Cys731.

It belongs to the vitamin-B12 independent methionine synthase family. Zn(2+) serves as cofactor.

The catalysed reaction is 5-methyltetrahydropteroyltri-L-glutamate + L-homocysteine = tetrahydropteroyltri-L-glutamate + L-methionine. The protein operates within amino-acid biosynthesis; L-methionine biosynthesis via de novo pathway; L-methionine from L-homocysteine (MetE route): step 1/1. Its function is as follows. Catalyzes the transfer of a methyl group from 5-methyltetrahydrofolate to homocysteine resulting in methionine formation. The sequence is that of 5-methyltetrahydropteroyltriglutamate--homocysteine methyltransferase from Xylella fastidiosa (strain M12).